We begin with the raw amino-acid sequence, 267 residues long: Small ribosomal subunit protein uS2 (267 aa).

A disordered region spans residues 224–244 (GRQGEDEDVTEDSFKDNKDAK). Over residues 235–244 (DSFKDNKDAK) the composition is skewed to basic and acidic residues.

This sequence belongs to the universal ribosomal protein uS2 family.

This Lactiplantibacillus plantarum (strain ATCC BAA-793 / NCIMB 8826 / WCFS1) (Lactobacillus plantarum) protein is Small ribosomal subunit protein uS2.